A 599-amino-acid chain; its full sequence is Flap endonuclease GEN-like 1 (599 aa).

Positions 1–96 are N-domain; the sequence is MGVGGNFWDL…ISRFFRSSGI (96 aa). Residues 2 to 95 are XPG-N domain; sequence GVGGNFWDLL…RISRFFRSSG (94 aa). Asp-31, Asp-75, Glu-140, Glu-142, Asp-161, Asp-163, and Asp-213 together coordinate Mg(2+). The tract at residues 128 to 213 is XPG-I domain; the sequence is ELLGIPVLKA…IAISLLVGND (86 aa). Residues 128–217 form an I-domain region; it reads ELLGIPVLKA…LLVGNDYDSG (90 aa). The segment at 213 to 407 is 5'-3' exonuclease domain; sequence DYDSGGVLGI…LLPMLSTIYL (195 aa). Disordered stretches follow at residues 522–545 and 559–599; these read RESK…MGVQ and AAGQ…LLFG. 2 stretches are compositionally biased toward polar residues: residues 563 to 572 and 580 to 590; these read SIETGGSSKA and ATSTSSSNLTK.

It belongs to the XPG/RAD2 endonuclease family. GEN subfamily. The cofactor is Mg(2+).

The protein resides in the nucleus. In terms of biological role, endonuclease which cleaves flap structures at the junction between single-stranded DNA and double-stranded DNA with a specific cleavage site in the 5' overhang strand exactly one nucleotide 3' of the branch point. Structure- and sequence-specific nuclease that resolves holliday junctions (HJs) by symmetrically oriented incisions in two opposing strands near the junction point, thus leading to ligatable products; HJs are physical links between homologous DNA molecules that arise as central intermediary structures during homologous recombination and repair in meiotic and somatic cells. Structure-specific nuclease with 5'-flap endonuclease activity, preferentially cleaving static flaps 5' overhang strand exactly one nucleotide in the 3' direction of the branch point. Also able to cleave double-stranded flap strand 1 exactly at the branch point. The sequence is that of Flap endonuclease GEN-like 1 from Arabidopsis thaliana (Mouse-ear cress).